We begin with the raw amino-acid sequence, 65 residues long: uncharacterized protein (65 aa).

The ompR/PhoB-type DNA-binding region spans M1–L65.

This is an uncharacterized protein from Escherichia coli (strain K12).